A 185-amino-acid chain; its full sequence is ATP-dependent protease subunit HslV (185 aa).

T2 is a catalytic residue. G157, C160, and T163 together coordinate Na(+).

The protein belongs to the peptidase T1B family. HslV subfamily. A double ring-shaped homohexamer of HslV is capped on each side by a ring-shaped HslU homohexamer. The assembly of the HslU/HslV complex is dependent on binding of ATP.

It is found in the cytoplasm. The enzyme catalyses ATP-dependent cleavage of peptide bonds with broad specificity.. Its activity is regulated as follows. Allosterically activated by HslU binding. Functionally, protease subunit of a proteasome-like degradation complex believed to be a general protein degrading machinery. The sequence is that of ATP-dependent protease subunit HslV from Vibrio cholerae serotype O1 (strain ATCC 39315 / El Tor Inaba N16961).